A 393-amino-acid chain; its full sequence is Elongation factor Tu (393 aa).

In terms of domain architecture, tr-type G spans 10-203 (KPHVNIGTIG…AVDSYIPEPV (194 aa)). Residues 19–26 (GHVDHGKT) form a G1 region. A GTP-binding site is contributed by 19–26 (GHVDHGKT). Position 26 (threonine 26) interacts with Mg(2+). A G2 region spans residues 60–64 (GITIS). Residues 81–84 (DCPG) are G3. GTP-binding positions include 81–85 (DCPGH) and 136–139 (NKVD). The interval 136 to 139 (NKVD) is G4. The G5 stretch occupies residues 173–175 (SAL).

This sequence belongs to the TRAFAC class translation factor GTPase superfamily. Classic translation factor GTPase family. EF-Tu/EF-1A subfamily. In terms of assembly, monomer.

It localises to the cytoplasm. It catalyses the reaction GTP + H2O = GDP + phosphate + H(+). Its function is as follows. GTP hydrolase that promotes the GTP-dependent binding of aminoacyl-tRNA to the A-site of ribosomes during protein biosynthesis. The chain is Elongation factor Tu from Prosthecochloris aestuarii (strain DSM 271 / SK 413).